Consider the following 535-residue polypeptide: Nuclear/nucleolar GTPase 2 (535 aa).

The interval 1–42 (MAKKKERAVNVSGKPRHSLDVNRANDKKGAGGGAGGGGGGRS) is disordered. A compositionally biased stretch (basic and acidic residues) spans 17 to 29 (HSLDVNRANDKKG). Residues 30-41 (AGGGAGGGGGGR) are compositionally biased toward gly residues. One can recognise a CP-type G domain in the interval 213–374 (WGELYKVIDS…LIDCPGVVYQ (162 aa)). Residues 261-264 (NKCD) form a G4 region. The G5 stretch occupies residues 290–292 (SIN). Positions 323–330 (GYPNVGKS) are G1. The segment at 349–353 (GETKV) is G2. Positions 367–370 (DCPG) are G3. The interval 464 to 495 (FFVPPPQQGEDSPSETAEPVDKSDEEGVSSDR) is disordered.

Belongs to the TRAFAC class YlqF/YawG GTPase family. RsgA subfamily.

It is found in the nucleus. Its subcellular location is the nucleolus. GTPase involved in pre-60S ribosomal subunit maturation. This is Nuclear/nucleolar GTPase 2 from Oryza sativa subsp. indica (Rice).